The following is a 127-amino-acid chain: Holo-[acyl-carrier-protein] synthase (127 aa).

The Mg(2+) site is built by Asp9 and Glu58.

The protein belongs to the P-Pant transferase superfamily. AcpS family. The cofactor is Mg(2+).

It is found in the cytoplasm. It carries out the reaction apo-[ACP] + CoA = holo-[ACP] + adenosine 3',5'-bisphosphate + H(+). Functionally, transfers the 4'-phosphopantetheine moiety from coenzyme A to a Ser of acyl-carrier-protein. The protein is Holo-[acyl-carrier-protein] synthase of Shewanella baltica (strain OS223).